A 209-amino-acid polypeptide reads, in one-letter code: Glycerol-3-phosphate acyltransferase (209 aa).

The next 5 helical transmembrane spans lie at 4-24, 53-75, 80-102, 112-132, and 138-158; these read IAIG…AILI, LAAA…IGYG, PFWL…FFHF, LGAI…TWLL, and GYSS…VWWF.

Belongs to the PlsY family. In terms of assembly, probably interacts with PlsX.

It localises to the cell inner membrane. It carries out the reaction an acyl phosphate + sn-glycerol 3-phosphate = a 1-acyl-sn-glycero-3-phosphate + phosphate. Its pathway is lipid metabolism; phospholipid metabolism. In terms of biological role, catalyzes the transfer of an acyl group from acyl-phosphate (acyl-PO(4)) to glycerol-3-phosphate (G3P) to form lysophosphatidic acid (LPA). This enzyme utilizes acyl-phosphate as fatty acyl donor, but not acyl-CoA or acyl-ACP. The polypeptide is Glycerol-3-phosphate acyltransferase (Sodalis glossinidius (strain morsitans)).